Consider the following 175-residue polypeptide: Regenerating islet-derived protein 3-alpha (175 aa).

The signal sequence occupies residues 1–26 (MLPHLVLNSISWMLLSCLLFVFQVQG). A propeptide spanning residues 27–37 (EDFQKEVPSPR) is cleaved from the precursor. Cystine bridges form between Cys40–Cys51, Cys68–Cys171, and Cys146–Cys163. Residues 47–172 (YRSHCYALVM…CDGTLPFVCK (126 aa)) enclose the C-type lectin domain. Zn(2+) is bound by residues His50, His107, Glu121, and His145. Residues 103–118 (WIGLHDPTMGQQPNGG) form a sufficient to activate EXTL3 region.

In terms of assembly, forms a hexameric membrane-permeabilizing oligomeric pore on membrane phospholipids. The hexamer is formed by three dimers related by helical symmetry. Forms filaments, filamentation traps pore complexes and limits damage to host cells. Interacts with EXTL3. Proteolytic processing by trypsin removes an inhibitory N-terminal propeptide and is essential for peptidoglycan binding and antibacterial activity. Small intestine and pancreas.

It is found in the secreted. In terms of biological role, bactericidal C-type lectin. The lack of the EPN motif may explain its inability to bind peptidoglycan. Functionally, acts as a hormone in response to different stimuli like anti-inflammatory signals, such as IL17A, or gut microbiome. Secreted by different cell types to activate its receptor EXTL3 and induce cell specific signaling pathways. Induced by IL17A in keratinocytes, regulates keratinocyte proliferation and differentiation after skin injury via activation of EXTL3-PI3K-AKT signaling pathway. In parallel, inhibits skin inflammation through the inhibition of inflammatory cytokines such as IL6 and TNF. In pancreas, is able to permealize beta-cells membrane and stimulate their proliferation. The sequence is that of Regenerating islet-derived protein 3-alpha (Reg3a) from Mus musculus (Mouse).